The primary structure comprises 36 residues: Photosystem II reaction center protein M (36 aa).

The helical transmembrane segment at 5 to 25 (ILGLIATALFIIIPTSFLLIL) threads the bilayer.

Belongs to the PsbM family. In terms of assembly, PSII is composed of 1 copy each of membrane proteins PsbA, PsbB, PsbC, PsbD, PsbE, PsbF, PsbH, PsbI, PsbJ, PsbK, PsbL, PsbM, PsbT, PsbX, PsbY, PsbZ, Psb30/Ycf12, at least 3 peripheral proteins of the oxygen-evolving complex and a large number of cofactors. It forms dimeric complexes.

It is found in the plastid. The protein localises to the chloroplast thylakoid membrane. Functionally, one of the components of the core complex of photosystem II (PSII). PSII is a light-driven water:plastoquinone oxidoreductase that uses light energy to abstract electrons from H(2)O, generating O(2) and a proton gradient subsequently used for ATP formation. It consists of a core antenna complex that captures photons, and an electron transfer chain that converts photonic excitation into a charge separation. This subunit is found at the monomer-monomer interface. This Chlorokybus atmophyticus (Soil alga) protein is Photosystem II reaction center protein M.